Reading from the N-terminus, the 188-residue chain is Ribosomal RNA small subunit methyltransferase G (188 aa).

Residues Gly69, Phe74, 119-120 (VQ), and Arg134 each bind S-adenosyl-L-methionine.

It belongs to the methyltransferase superfamily. RNA methyltransferase RsmG family.

The protein localises to the cytoplasm. The catalysed reaction is guanosine(527) in 16S rRNA + S-adenosyl-L-methionine = N(7)-methylguanosine(527) in 16S rRNA + S-adenosyl-L-homocysteine. In terms of biological role, specifically methylates the N7 position of guanine in position 527 of 16S rRNA. This Campylobacter jejuni subsp. doylei (strain ATCC BAA-1458 / RM4099 / 269.97) protein is Ribosomal RNA small subunit methyltransferase G.